The chain runs to 411 residues: LL-diaminopimelate aminotransferase (411 aa).

Substrate-binding residues include Tyr-15 and Gly-42. Pyridoxal 5'-phosphate is bound by residues Tyr-72, 108-109 (SK), Tyr-132, Asn-187, Tyr-218, and 246-248 (SFS). Residues Lys-109, Tyr-132, and Asn-187 each coordinate substrate. The residue at position 249 (Lys-249) is an N6-(pyridoxal phosphate)lysine. Pyridoxal 5'-phosphate-binding residues include Arg-257 and Asn-292. 2 residues coordinate substrate: Asn-292 and Arg-388.

This sequence belongs to the class-I pyridoxal-phosphate-dependent aminotransferase family. LL-diaminopimelate aminotransferase subfamily. Homodimer. Pyridoxal 5'-phosphate is required as a cofactor.

The catalysed reaction is (2S,6S)-2,6-diaminopimelate + 2-oxoglutarate = (S)-2,3,4,5-tetrahydrodipicolinate + L-glutamate + H2O + H(+). The protein operates within amino-acid biosynthesis; L-lysine biosynthesis via DAP pathway; LL-2,6-diaminopimelate from (S)-tetrahydrodipicolinate (aminotransferase route): step 1/1. In terms of biological role, involved in the synthesis of meso-diaminopimelate (m-DAP or DL-DAP), required for both lysine and peptidoglycan biosynthesis. Catalyzes the direct conversion of tetrahydrodipicolinate to LL-diaminopimelate. The sequence is that of LL-diaminopimelate aminotransferase from Trichodesmium erythraeum (strain IMS101).